The primary structure comprises 484 residues: Protein nucleotidyltransferase YdiU (484 aa).

Residues glycine 81, glycine 83, arginine 84, lysine 103, aspartate 115, glycine 116, arginine 166, and arginine 173 each contribute to the ATP site. Aspartate 244 acts as the Proton acceptor in catalysis. Residues asparagine 245 and aspartate 254 each contribute to the Mg(2+) site. Aspartate 254 contributes to the ATP binding site.

Belongs to the SELO family. It depends on Mg(2+) as a cofactor. Mn(2+) is required as a cofactor.

The enzyme catalyses L-seryl-[protein] + ATP = 3-O-(5'-adenylyl)-L-seryl-[protein] + diphosphate. The catalysed reaction is L-threonyl-[protein] + ATP = 3-O-(5'-adenylyl)-L-threonyl-[protein] + diphosphate. It carries out the reaction L-tyrosyl-[protein] + ATP = O-(5'-adenylyl)-L-tyrosyl-[protein] + diphosphate. It catalyses the reaction L-histidyl-[protein] + UTP = N(tele)-(5'-uridylyl)-L-histidyl-[protein] + diphosphate. The enzyme catalyses L-seryl-[protein] + UTP = O-(5'-uridylyl)-L-seryl-[protein] + diphosphate. The catalysed reaction is L-tyrosyl-[protein] + UTP = O-(5'-uridylyl)-L-tyrosyl-[protein] + diphosphate. In terms of biological role, nucleotidyltransferase involved in the post-translational modification of proteins. It can catalyze the addition of adenosine monophosphate (AMP) or uridine monophosphate (UMP) to a protein, resulting in modifications known as AMPylation and UMPylation. This Shewanella sp. (strain MR-4) protein is Protein nucleotidyltransferase YdiU.